The sequence spans 175 residues: MADQADVLADPDFEEETSIQKFKRRLKEEPLIPLGCAATCYALYRAYRSGKAKDSVEMNRMFRARIYAQFFTLLAVVAGGMYYKTERKQRREFEKKVEERKAQEKRDAWLRELEARDKEDKGWKERHAAVSVTAKKETEGAVDKNVNQAPTEEVVEKRGTGILDAVKALVQGKKD.

The 92-residue stretch at aspartate 3–glutamate 94 folds into the HIG1 domain. The next 2 helical transmembrane spans lie at proline 30 to alanine 46 and isoleucine 66 to tyrosine 83. The stretch at tyrosine 83–alanine 115 forms a coiled coil.

The protein belongs to the RCF1 family. As to quaternary structure, associates with the respiratory chain complex III/complex IV supercomplex.

Its subcellular location is the mitochondrion membrane. In terms of biological role, cytochrome c oxidase subunit which plays a role in assembly of respiratory supercomplexes. This is Respiratory supercomplex factor 1-B, mitochondrial (rcf1-B) from Talaromyces marneffei (strain ATCC 18224 / CBS 334.59 / QM 7333) (Penicillium marneffei).